We begin with the raw amino-acid sequence, 255 residues long: tRNA (guanine-N(1)-)-methyltransferase (255 aa).

Residues glycine 113 and 133–138 (IGDYVL) contribute to the S-adenosyl-L-methionine site.

It belongs to the RNA methyltransferase TrmD family. In terms of assembly, homodimer.

The protein localises to the cytoplasm. It catalyses the reaction guanosine(37) in tRNA + S-adenosyl-L-methionine = N(1)-methylguanosine(37) in tRNA + S-adenosyl-L-homocysteine + H(+). Functionally, specifically methylates guanosine-37 in various tRNAs. The polypeptide is tRNA (guanine-N(1)-)-methyltransferase (Enterobacter sp. (strain 638)).